Consider the following 192-residue polypeptide: MKNKVVVVTGVPGVGGTTVTQKAMDILSEEGLNYKMVNFGSAMFDVANEEGLASDRDQMRKLDPETQKRIQKMAGRKIAEMAKESPVAVDTHSTVKTPKGYLPGLPAWVLTELNPDIVIVVETDGDEILMRRLSDESRKRDLETTASIEEHQFMNRAAAMSYGVLTGATVKIVKNKNGLVDKAVEELISVLR.

10–18 contributes to the ATP binding site; that stretch reads GVPGVGGTT.

The protein belongs to the archaeal adenylate kinase family. As to quaternary structure, monomer.

Its subcellular location is the cytoplasm. The catalysed reaction is AMP + ATP = 2 ADP. This chain is Adenylate kinase, found in Methanococcus maripaludis (strain C6 / ATCC BAA-1332).